A 509-amino-acid polypeptide reads, in one-letter code: MTVVSGASKASGADLLDYDVVVARFDPVFGLEVHVELSTVTKMFCGCATTFGAEPNTQVCPVCLGLPGSLPVLNRAAVQSAIRIGLALNCEIVPWCRFARKNYFYPDVPKNYQISQYDEPIAINGYLEVPLEDDTTWRVEIERAHMEEDTGKLTHLGSETGRIYGATTSLIDYNRAGVPLIEIVTKPIEGAGVRAPQIARAYVKALQDLLRTLDVSDVRMDQGSMRCDANVSLKPIGTVEFGTRSEIKNVNSLKSVEMAVRYEMQRQGAILVSGGRIAQETRHFHEDGYTSPGRAKETAQDYRYFPDPDLEPVAPSRELVEQLRQTIPELPWLSRKRIQQEWGISDEVMRDLVNAGAVELVAATVKNGASSEQARAWWGNFLVQKANEANITLDELAITPAQVAVVVALVDEGKLSIRLARQVVEGVLAGEGEPEQVMVDRDLALVRDDSVMQAAVDEALAADPDVAEKIRGGKVAAAGAIVGAVMKTTRGQADAARVRELVLAICGQG.

The protein belongs to the GatB/GatE family. GatB subfamily. In terms of assembly, heterotrimer of A, B and C subunits.

It carries out the reaction L-glutamyl-tRNA(Gln) + L-glutamine + ATP + H2O = L-glutaminyl-tRNA(Gln) + L-glutamate + ADP + phosphate + H(+). The catalysed reaction is L-aspartyl-tRNA(Asn) + L-glutamine + ATP + H2O = L-asparaginyl-tRNA(Asn) + L-glutamate + ADP + phosphate + 2 H(+). Allows the formation of correctly charged Asn-tRNA(Asn) or Gln-tRNA(Gln) through the transamidation of misacylated Asp-tRNA(Asn) or Glu-tRNA(Gln) in organisms which lack either or both of asparaginyl-tRNA or glutaminyl-tRNA synthetases. The reaction takes place in the presence of glutamine and ATP through an activated phospho-Asp-tRNA(Asn) or phospho-Glu-tRNA(Gln). This is Aspartyl/glutamyl-tRNA(Asn/Gln) amidotransferase subunit B from Mycobacterium leprae (strain Br4923).